The following is a 535-amino-acid chain: CTP synthase (535 aa).

The segment at methionine 1 to isoleucine 266 is amidoligase domain. Residue serine 14 coordinates CTP. Serine 14 is a binding site for UTP. ATP-binding positions include serine 15–leucine 20 and aspartate 72. Residues aspartate 72 and glutamate 140 each contribute to the Mg(2+) site. CTP contacts are provided by residues aspartate 147 to glutamate 149, lysine 187 to glutamine 192, and lysine 223. UTP contacts are provided by residues lysine 187–glutamine 192 and lysine 223. Residues arginine 292 to alanine 534 form the Glutamine amidotransferase type-1 domain. Glycine 354 provides a ligand contact to L-glutamine. Catalysis depends on cysteine 381, which acts as the Nucleophile; for glutamine hydrolysis. Residues leucine 382–glutamine 385, glutamate 405, and arginine 462 each bind L-glutamine. Active-site residues include histidine 507 and glutamate 509.

It belongs to the CTP synthase family. Homotetramer.

The catalysed reaction is UTP + L-glutamine + ATP + H2O = CTP + L-glutamate + ADP + phosphate + 2 H(+). The enzyme catalyses L-glutamine + H2O = L-glutamate + NH4(+). It carries out the reaction UTP + NH4(+) + ATP = CTP + ADP + phosphate + 2 H(+). The protein operates within pyrimidine metabolism; CTP biosynthesis via de novo pathway; CTP from UDP: step 2/2. With respect to regulation, allosterically activated by GTP, when glutamine is the substrate; GTP has no effect on the reaction when ammonia is the substrate. The allosteric effector GTP functions by stabilizing the protein conformation that binds the tetrahedral intermediate(s) formed during glutamine hydrolysis. Inhibited by the product CTP, via allosteric rather than competitive inhibition. In terms of biological role, catalyzes the ATP-dependent amination of UTP to CTP with either L-glutamine or ammonia as the source of nitrogen. Regulates intracellular CTP levels through interactions with the four ribonucleotide triphosphates. The polypeptide is CTP synthase (Pelobacter propionicus (strain DSM 2379 / NBRC 103807 / OttBd1)).